A 95-amino-acid polypeptide reads, in one-letter code: Co-chaperonin GroES (95 aa).

The protein belongs to the GroES chaperonin family. As to quaternary structure, heptamer of 7 subunits arranged in a ring. Interacts with the chaperonin GroEL.

The protein localises to the cytoplasm. Functionally, together with the chaperonin GroEL, plays an essential role in assisting protein folding. The GroEL-GroES system forms a nano-cage that allows encapsulation of the non-native substrate proteins and provides a physical environment optimized to promote and accelerate protein folding. GroES binds to the apical surface of the GroEL ring, thereby capping the opening of the GroEL channel. The chain is Co-chaperonin GroES from Caldicellulosiruptor bescii (strain ATCC BAA-1888 / DSM 6725 / KCTC 15123 / Z-1320) (Anaerocellum thermophilum).